Reading from the N-terminus, the 178-residue chain is Histone deacetylase complex subunit SAP30L (178 aa).

Disulfide bonds link Cys24/Cys25 and Cys33/Cys69. The Atypical zinc finger occupies 24–72 (CCLIEDAERCGRPAGNASFSKRIQKSISQRKLKLDIDKSVRHLYICDFH). The disordered stretch occupies residues 80-99 (RNKRKRKTSDDGGESPDHEV). The Nuclear localization signal (NLS) signature appears at 81–86 (NKRKRK). Residues 83–85 (RKR) form an important for DNA and phosphoinositide binding region.

This sequence belongs to the SAP30 family. In terms of assembly, interacts with components of the histone deacetylase complex sin3a, hdac1 and hdac2. Binds histones and nucleosomes. In terms of tissue distribution, detected in embryos at 2dpf (at protein level). Widely expressed during embryogenesis and in adults.

Its subcellular location is the nucleus. The protein localises to the nucleolus. Its function is as follows. Functions as a transcription repressor, probably via its interaction with histone deacetylase complexes. Required for normal expression of numerous target genes. Involved in the functional recruitment of the class 1 Sin3-histone deacetylase complex (HDAC) to the nucleolus. Binds DNA, apparently without sequence-specificity, and bends bound double-stranded DNA. Binds phosphoinositol phosphates (phosphoinositol 3-phosphate, phosphoinositol 4-phosphate and phosphoinositol 5-phosphate) via the same basic sequence motif that mediates DNA binding and nuclear import. The protein is Histone deacetylase complex subunit SAP30L (sap30l) of Danio rerio (Zebrafish).